A 95-amino-acid polypeptide reads, in one-letter code: Putative pterin-4-alpha-carbinolamine dehydratase (95 aa).

The protein belongs to the pterin-4-alpha-carbinolamine dehydratase family.

The catalysed reaction is (4aS,6R)-4a-hydroxy-L-erythro-5,6,7,8-tetrahydrobiopterin = (6R)-L-erythro-6,7-dihydrobiopterin + H2O. The polypeptide is Putative pterin-4-alpha-carbinolamine dehydratase (Prochlorococcus marinus (strain NATL2A)).